The following is a 229-amino-acid chain: Cytochrome c oxidase subunit 2 (229 aa).

Over 1-14 (MPTPNQTNFQDAAS) the chain is Mitochondrial intermembrane. Residues 15 to 45 (PLMEELTHFHDHTLMIVFMISLLVLYILLSM) form a helical membrane-spanning segment. The Mitochondrial matrix segment spans residues 46–59 (LSTKLTHTNTANAQ). A helical membrane pass occupies residues 60 to 87 (QAEMVWTILPAIILITIALPSLQILYMM). Residues 88–229 (DEINKPHMTI…DLWLAMIDTL (142 aa)) are Mitochondrial intermembrane-facing. Cu cation is bound by residues histidine 161, cysteine 196, glutamate 198, cysteine 200, histidine 204, and methionine 207. Residue glutamate 198 coordinates Mg(2+).

The protein belongs to the cytochrome c oxidase subunit 2 family. As to quaternary structure, component of the cytochrome c oxidase (complex IV, CIV), a multisubunit enzyme composed of 14 subunits. The complex is composed of a catalytic core of 3 subunits MT-CO1, MT-CO2 and MT-CO3, encoded in the mitochondrial DNA, and 11 supernumerary subunits COX4I, COX5A, COX5B, COX6A, COX6B, COX6C, COX7A, COX7B, COX7C, COX8 and NDUFA4, which are encoded in the nuclear genome. The complex exists as a monomer or a dimer and forms supercomplexes (SCs) in the inner mitochondrial membrane with NADH-ubiquinone oxidoreductase (complex I, CI) and ubiquinol-cytochrome c oxidoreductase (cytochrome b-c1 complex, complex III, CIII), resulting in different assemblies (supercomplex SCI(1)III(2)IV(1) and megacomplex MCI(2)III(2)IV(2)). Found in a complex with TMEM177, COA6, COX18, COX20, SCO1 and SCO2. Interacts with TMEM177 in a COX20-dependent manner. Interacts with COX20. Interacts with COX16. Cu cation serves as cofactor.

The protein localises to the mitochondrion inner membrane. The enzyme catalyses 4 Fe(II)-[cytochrome c] + O2 + 8 H(+)(in) = 4 Fe(III)-[cytochrome c] + 2 H2O + 4 H(+)(out). In terms of biological role, component of the cytochrome c oxidase, the last enzyme in the mitochondrial electron transport chain which drives oxidative phosphorylation. The respiratory chain contains 3 multisubunit complexes succinate dehydrogenase (complex II, CII), ubiquinol-cytochrome c oxidoreductase (cytochrome b-c1 complex, complex III, CIII) and cytochrome c oxidase (complex IV, CIV), that cooperate to transfer electrons derived from NADH and succinate to molecular oxygen, creating an electrochemical gradient over the inner membrane that drives transmembrane transport and the ATP synthase. Cytochrome c oxidase is the component of the respiratory chain that catalyzes the reduction of oxygen to water. Electrons originating from reduced cytochrome c in the intermembrane space (IMS) are transferred via the dinuclear copper A center (CU(A)) of subunit 2 and heme A of subunit 1 to the active site in subunit 1, a binuclear center (BNC) formed by heme A3 and copper B (CU(B)). The BNC reduces molecular oxygen to 2 water molecules using 4 electrons from cytochrome c in the IMS and 4 protons from the mitochondrial matrix. The polypeptide is Cytochrome c oxidase subunit 2 (MT-CO2) (Pelomedusa subrufa (African side-necked turtle)).